The sequence spans 100 residues: Ferredoxin (100 aa).

The propeptide occupies 1–8; that stretch reads MLSQVCRF. The 2Fe-2S ferredoxin-type domain occupies 9 to 100; the sequence is GTITAVKGGV…GENDGAVFEL (92 aa). Residues Cys-46, Cys-52, Cys-55, and Cys-85 each coordinate [2Fe-2S] cluster.

The cofactor is [2Fe-2S] cluster.

It localises to the hydrogenosome. Functionally, ferredoxins are iron-sulfur proteins that transfer electrons in a wide variety of metabolic reactions. It links pyruvate:ferredoxin oxidoreductase to hydrogenase. The polypeptide is Ferredoxin (Trichomonas vaginalis).